Here is an 83-residue protein sequence, read N- to C-terminus: MADPVRQRILLAVCDVLYIDETDLIDGDATDLRDLGLDSVRFVLLMKRLGVDRESELPSRLAENLSIEGWVSELSQSELESPT.

One can recognise a Carrier domain in the interval 3–83 (DPVRQRILLA…LSQSELESPT (81 aa)). Serine 39 is modified (O-(pantetheine 4'-phosphoryl)serine).

The protein belongs to the acyl carrier protein (ACP) family. The cofactor is pantetheine 4'-phosphate.

Its pathway is lipid metabolism; fatty acid metabolism. Acyl-carrier protein (ACP) involved in the biosynthesis of a unique class of isonitrile lipopeptides (INLPs) that seem to play a role in metal acquisition in M.marinum. Is the dedicated ACP for the loading of activated acyl groups catalyzed by MmaC. The sequence is that of Acyl carrier protein MmaB from Mycobacterium marinum (strain ATCC BAA-535 / M).